The sequence spans 191 residues: Crossover junction endodeoxyribonuclease RuvC (191 aa).

Catalysis depends on residues Asp7, Glu67, and Asp140. Residues Asp7, Glu67, and Asp140 each contribute to the Mg(2+) site.

The protein belongs to the RuvC family. In terms of assembly, homodimer which binds Holliday junction (HJ) DNA. The HJ becomes 2-fold symmetrical on binding to RuvC with unstacked arms; it has a different conformation from HJ DNA in complex with RuvA. In the full resolvosome a probable DNA-RuvA(4)-RuvB(12)-RuvC(2) complex forms which resolves the HJ. The cofactor is Mg(2+).

Its subcellular location is the cytoplasm. The catalysed reaction is Endonucleolytic cleavage at a junction such as a reciprocal single-stranded crossover between two homologous DNA duplexes (Holliday junction).. The RuvA-RuvB-RuvC complex processes Holliday junction (HJ) DNA during genetic recombination and DNA repair. Endonuclease that resolves HJ intermediates. Cleaves cruciform DNA by making single-stranded nicks across the HJ at symmetrical positions within the homologous arms, yielding a 5'-phosphate and a 3'-hydroxyl group; requires a central core of homology in the junction. The consensus cleavage sequence is 5'-(A/T)TT(C/G)-3'. Cleavage occurs on the 3'-side of the TT dinucleotide at the point of strand exchange. HJ branch migration catalyzed by RuvA-RuvB allows RuvC to scan DNA until it finds its consensus sequence, where it cleaves and resolves the cruciform DNA. In Pelodictyon phaeoclathratiforme (strain DSM 5477 / BU-1), this protein is Crossover junction endodeoxyribonuclease RuvC.